We begin with the raw amino-acid sequence, 537 residues long: Bifunctional NAD(P)H-hydrate repair enzyme Nnr (537 aa).

Residues M1–P227 form an NAD(P)H-hydrate epimerase region. The 211-residue stretch at I13–V223 folds into the YjeF N-terminal domain. The segment at G65–D69 is NADPHX 1; for epimerase activity. Positions 66 and 135 each coordinate K(+). Residues G139–A145 form an NADPHX 1; for epimerase activity region. Positions 150 and 168 each coordinate (6S)-NADPHX. S171 provides a ligand contact to K(+). Residues G226–P508 form the YjeF C-terminal domain. The interval P227–S537 is ADP-dependent (S)-NAD(P)H-hydrate dehydratase. G329 serves as a coordination point for (6S)-NADPHX. Residues H381–I387 are NADPHX 2; for dehydratase activity. Residues K421–D425 and V440–G449 contribute to the ADP site. D450 is a (6S)-NADPHX binding site.

In the N-terminal section; belongs to the NnrE/AIBP family. It in the C-terminal section; belongs to the NnrD/CARKD family. Requires K(+) as cofactor.

It catalyses the reaction (6S)-NADHX + ADP = AMP + phosphate + NADH + H(+). It carries out the reaction (6S)-NADPHX + ADP = AMP + phosphate + NADPH + H(+). The enzyme catalyses (6R)-NADHX = (6S)-NADHX. The catalysed reaction is (6R)-NADPHX = (6S)-NADPHX. Bifunctional enzyme that catalyzes the epimerization of the S- and R-forms of NAD(P)HX and the dehydration of the S-form of NAD(P)HX at the expense of ADP, which is converted to AMP. This allows the repair of both epimers of NAD(P)HX, a damaged form of NAD(P)H that is a result of enzymatic or heat-dependent hydration. The protein is Bifunctional NAD(P)H-hydrate repair enzyme Nnr (nnr) of Hyperthermus butylicus (strain DSM 5456 / JCM 9403 / PLM1-5).